The following is a 317-amino-acid chain: uncharacterized protein (317 aa).

This is an uncharacterized protein from Borreliella burgdorferi (strain ATCC 35210 / DSM 4680 / CIP 102532 / B31) (Borrelia burgdorferi).